A 103-amino-acid chain; its full sequence is Putative double-stranded DNA mimic protein HAPS_1002 (103 aa).

It belongs to the putative dsDNA mimic protein family.

Its function is as follows. May act as a double-stranded DNA (dsDNA) mimic. Probably regulates the activity of a dsDNA-binding protein. The chain is Putative double-stranded DNA mimic protein HAPS_1002 from Glaesserella parasuis serovar 5 (strain SH0165) (Haemophilus parasuis).